The chain runs to 188 residues: Anaphase-promoting complex subunit 10 (188 aa).

In terms of domain architecture, DOC spans 4-187 (NSNINSNSRL…SPEVSMFQTL (184 aa)).

It belongs to the APC10 family. The APC/C is composed of at least 13 subunits that stay tightly associated throughout the cell cycle: anapc1, anapc2, anapc3, anapc4, anapc5, anapc6, anapc7, anapc8, anapc10, anapc11, cdc20, cdc26 and cdh1.

Its subcellular location is the nucleus. Its pathway is protein modification; protein ubiquitination. Its function is as follows. Component of the anaphase promoting complex/cyclosome (APC/C), a cell cycle-regulated E3 ubiquitin-protein ligase complex that controls progression through mitosis and the G1 phase of the cell cycle. The chain is Anaphase-promoting complex subunit 10 (anapc10) from Dictyostelium discoideum (Social amoeba).